Consider the following 71-residue polypeptide: Large ribosomal subunit protein uL30 (71 aa).

This sequence belongs to the universal ribosomal protein uL30 family. In terms of assembly, part of the 50S ribosomal subunit.

This is Large ribosomal subunit protein uL30 from Mycolicibacterium paratuberculosis (strain ATCC BAA-968 / K-10) (Mycobacterium paratuberculosis).